The chain runs to 68 residues: MMFRLTSVSCFLLVIVCLNLFQVVLTRRCVPPSRYCTRHRPCCRGTCCSGLCRPMCNLWYGKRATFQE.

The first 26 residues, 1–26 (MMFRLTSVSCFLLVIVCLNLFQVVLT), serve as a signal peptide directing secretion. 4 cysteine pairs are disulfide-bonded: cysteine 29-cysteine 43, cysteine 36-cysteine 48, cysteine 42-cysteine 52, and cysteine 47-cysteine 56. Tyrosine 60 bears the Tyrosine amide mark. Residues 64–68 (ATFQE) constitute a propeptide that is removed on maturation.

It belongs to the conotoxin I2 superfamily. Expressed by the venom duct.

Its subcellular location is the secreted. This Conus striatus (Striated cone) protein is conotoxin S11.3.